The chain runs to 1596 residues: SET-binding protein (1596 aa).

Residues 1 to 12 show a composition bias toward polar residues; sequence MESRETLSSSRQ. Disordered regions lie at residues 1 to 83, 134 to 426, and 475 to 518; these read MESR…WVAG, KQSG…SIKA, and SPSV…SRKL. Residues 64 to 81 show a composition bias toward basic and acidic residues; the sequence is GSGRDVDSNSNADSEKWV. Positions 164-175 are enriched in low complexity; that stretch reads LTASDLAASDLK. Composition is skewed to polar residues over residues 213-236 and 270-282; these read KSSSQNHMDWSTNSDSGPVTQNCF and AGNTWSQLSNNNK. Residues 290 to 306 show a composition bias toward low complexity; the sequence is APSPSSHSSPAPPSSSA. A compositionally biased stretch (basic and acidic residues) spans 363–372; that stretch reads DNTEGKREGY. The segment covering 375–395 has biased composition (polar residues); it reads DSAQEASPARQNVSSASNPEN. A DNA-binding region (a.T hook 1) is located at residues 584-596; that stretch reads KKKRGRPKKQPLL. Disordered stretches follow at residues 604 to 624, 722 to 763, and 777 to 796; these read GTSTSPVSPISREFPGTKKRK, YIGK…AVPS, and HPLSTQLGGSNGNLSPASTE. The segment covering 779–796 has biased composition (polar residues); the sequence is LSTQLGGSNGNLSPASTE. The residue at position 817 (K817) is an N6-acetyllysine. The span at 854–880 shows a compositional bias: polar residues; that stretch reads SPVSESHSEETIPSDSGIGTDNNSTSD. The tract at residues 854–889 is disordered; the sequence is SPVSESHSEETIPSDSGIGTDNNSTSDQAEKSSESR. The a.T hook 2 DNA-binding region spans 1016–1028; it reads KKKRGRPAKTNDT. Disordered stretches follow at residues 1134-1164, 1202-1225, 1245-1300, 1325-1344, 1440-1473, and 1518-1596; these read PPKVGSASLSSGRLHKRKHKHKHKHKEDRIL, EKNKHKEKQKHQHSEAGHKASKNN, AKEK…GSKR, SSYDSSMSPGMPSPHLKVDQ, QRQSKTGNNFVKKRRGRPRKQPTQFDEDSRDQMP, and EAPP…EVLP. Positions 1146–1159 are enriched in basic residues; that stretch reads RLHKRKHKHKHKHK. Over residues 1450 to 1459 the composition is skewed to basic residues; that stretch reads VKKRRGRPRK. A DNA-binding region (a.T hook 3) is located at residues 1451 to 1463; it reads KKRRGRPRKQPTQ. 3 repeat units span residues 1520–1527, 1528–1535, and 1536–1543. Residues 1520–1543 are 3 X 8 AA tandem repeats of P-P-L-P-P-P-P-P; the sequence is PPLPPPPPPPLPPPPPPPLPPPPP. 2 stretches are compositionally biased toward pro residues: residues 1520–1546 and 1560–1572; these read PPLPPPPPPPLPPPPPPPLPPPPPLPK and PAQPPQQSPPQQP.

Interacts with SET. Expressed in numerous tissues. Expressed at low levels in myeloid and monocytic cells as well as in CD34+ cells; expression levels are higher in myeloid malignancies.

It is found in the nucleus. This Homo sapiens (Human) protein is SET-binding protein (SETBP1).